A 459-amino-acid polypeptide reads, in one-letter code: Methylenetetrahydrofolate--tRNA-(uracil-5-)-methyltransferase TrmFO (459 aa).

15 to 20 is an FAD binding site; sequence GAGLAG.

Belongs to the MnmG family. TrmFO subfamily. The cofactor is FAD.

The protein localises to the cytoplasm. It carries out the reaction uridine(54) in tRNA + (6R)-5,10-methylene-5,6,7,8-tetrahydrofolate + NADH + H(+) = 5-methyluridine(54) in tRNA + (6S)-5,6,7,8-tetrahydrofolate + NAD(+). It catalyses the reaction uridine(54) in tRNA + (6R)-5,10-methylene-5,6,7,8-tetrahydrofolate + NADPH + H(+) = 5-methyluridine(54) in tRNA + (6S)-5,6,7,8-tetrahydrofolate + NADP(+). Functionally, catalyzes the folate-dependent formation of 5-methyl-uridine at position 54 (M-5-U54) in all tRNAs. The protein is Methylenetetrahydrofolate--tRNA-(uracil-5-)-methyltransferase TrmFO of Syntrophotalea carbinolica (strain DSM 2380 / NBRC 103641 / GraBd1) (Pelobacter carbinolicus).